Here is a 392-residue protein sequence, read N- to C-terminus: Galactokinase (392 aa).

Residues arginine 37, glutamate 43, histidine 44, and aspartate 46 each contribute to the alpha-D-galactose site. Residues glycine 136, glycine 138, serine 140, and serine 141 each contribute to the ATP site. Aspartate 186 provides a ligand contact to alpha-D-galactose. Catalysis depends on aspartate 186, which acts as the Proton acceptor. Residue serine 230 is modified to Phosphoserine. Alpha-D-galactose is bound at residue tyrosine 236.

This sequence belongs to the GHMP kinase family. GalK subfamily. In terms of assembly, homodimer.

It catalyses the reaction alpha-D-galactose + ATP = alpha-D-galactose 1-phosphate + ADP + H(+). The protein operates within carbohydrate metabolism; galactose metabolism. Functionally, catalyzes the transfer of a phosphate from ATP to alpha-D-galactose and participates in the first committed step in the catabolism of galactose. In Bos taurus (Bovine), this protein is Galactokinase (GALK1).